A 324-amino-acid polypeptide reads, in one-letter code: MNFQPIDGKKLLAWLQPVLSDIKGKITPNVEMRKVTWFRTGGLAELFYQPADEDDLALFFKVLPEFVPVTIVGIGSNLLVRDGGIPGVVIRLSTKSFGQIKQVSSTRFLVGAATADKHLASAALEAEISGFHFYHGIPGGLGGALKMNAGANGVETAERVVEVYALDRKGERHILNLRDMNYAYRHCNIPEGLVFTAALLEGDVGNKDDIRAAMHEVALHRETVQPIREKTGGSTFRNLEDISAWKVIDEAGCRGLQIGGAQMSEMHCNFMINMGEATGYDLEKLGETVRARVFNHSAHHLEWEIQRIGQFEQDRIVLPFDQFH.

In terms of domain architecture, FAD-binding PCMH-type spans 39 to 220 (RTGGLAELFY…RAAMHEVALH (182 aa)). R185 is an active-site residue. S234 (proton donor) is an active-site residue. E304 is an active-site residue.

Belongs to the MurB family. FAD serves as cofactor.

It is found in the cytoplasm. The catalysed reaction is UDP-N-acetyl-alpha-D-muramate + NADP(+) = UDP-N-acetyl-3-O-(1-carboxyvinyl)-alpha-D-glucosamine + NADPH + H(+). Its pathway is cell wall biogenesis; peptidoglycan biosynthesis. Functionally, cell wall formation. The polypeptide is UDP-N-acetylenolpyruvoylglucosamine reductase (Bartonella bacilliformis (strain ATCC 35685 / KC583 / Herrer 020/F12,63)).